The chain runs to 508 residues: Ribose import ATP-binding protein RbsA 2 (508 aa).

ABC transporter domains follow at residues 6–241 (LTIH…VGRE) and 254–499 (ERSG…SGMG). Residue 38–45 (GENGAGKS) participates in ATP binding.

Belongs to the ABC transporter superfamily. Ribose importer (TC 3.A.1.2.1) family. In terms of assembly, the complex is composed of an ATP-binding protein (RbsA), two transmembrane proteins (RbsC) and a solute-binding protein (RbsB).

Its subcellular location is the cell inner membrane. It catalyses the reaction D-ribose(out) + ATP + H2O = D-ribose(in) + ADP + phosphate + H(+). Its function is as follows. Part of the ABC transporter complex RbsABC involved in ribose import. Responsible for energy coupling to the transport system. The polypeptide is Ribose import ATP-binding protein RbsA 2 (Rhizobium etli (strain ATCC 51251 / DSM 11541 / JCM 21823 / NBRC 15573 / CFN 42)).